Consider the following 191-residue polypeptide: Glycerol-3-phosphate acyltransferase (191 aa).

The next 6 membrane-spanning stretches (helical) occupy residues 7 to 27, 51 to 71, 80 to 100, 115 to 135, 139 to 159, and 161 to 181; these read ILVL…SYIG, KLAV…VMLA, FVFM…WLSF, FIEY…FVIF, SLSS…HYSA, and ESIT…ENIV.

It belongs to the PlsY family. As to quaternary structure, probably interacts with PlsX.

It is found in the cell inner membrane. The catalysed reaction is an acyl phosphate + sn-glycerol 3-phosphate = a 1-acyl-sn-glycero-3-phosphate + phosphate. The protein operates within lipid metabolism; phospholipid metabolism. Catalyzes the transfer of an acyl group from acyl-phosphate (acyl-PO(4)) to glycerol-3-phosphate (G3P) to form lysophosphatidic acid (LPA). This enzyme utilizes acyl-phosphate as fatty acyl donor, but not acyl-CoA or acyl-ACP. This chain is Glycerol-3-phosphate acyltransferase, found in Ehrlichia canis (strain Jake).